The sequence spans 669 residues: Dymeclin (669 aa).

A lipid anchor (N-myristoyl glycine) is attached at Gly-2.

The protein belongs to the dymeclin family. In terms of processing, myristoylated in vitro; myristoylation is not essential for protein targeting to Golgi compartment.

The protein resides in the cytoplasm. It is found in the golgi apparatus. In terms of biological role, necessary for correct organization of Golgi apparatus. In Xenopus laevis (African clawed frog), this protein is Dymeclin (dym).